We begin with the raw amino-acid sequence, 159 residues long: 6,7-dimethyl-8-ribityllumazine synthase (159 aa).

5-amino-6-(D-ribitylamino)uracil-binding positions include Trp-26, 58-60 (SFE), and 80-82 (VVI). 85-86 (GT) is a binding site for (2S)-2-hydroxy-3-oxobutyl phosphate. The Proton donor role is filled by His-88. Phe-113 serves as a coordination point for 5-amino-6-(D-ribitylamino)uracil. (2S)-2-hydroxy-3-oxobutyl phosphate is bound at residue Arg-127.

The protein belongs to the DMRL synthase family.

The enzyme catalyses (2S)-2-hydroxy-3-oxobutyl phosphate + 5-amino-6-(D-ribitylamino)uracil = 6,7-dimethyl-8-(1-D-ribityl)lumazine + phosphate + 2 H2O + H(+). Its pathway is cofactor biosynthesis; riboflavin biosynthesis; riboflavin from 2-hydroxy-3-oxobutyl phosphate and 5-amino-6-(D-ribitylamino)uracil: step 1/2. Functionally, catalyzes the formation of 6,7-dimethyl-8-ribityllumazine by condensation of 5-amino-6-(D-ribitylamino)uracil with 3,4-dihydroxy-2-butanone 4-phosphate. This is the penultimate step in the biosynthesis of riboflavin. In Renibacterium salmoninarum (strain ATCC 33209 / DSM 20767 / JCM 11484 / NBRC 15589 / NCIMB 2235), this protein is 6,7-dimethyl-8-ribityllumazine synthase.